A 274-amino-acid chain; its full sequence is MGIKFLNPVTPSSRGTVLVSKIGLSRGKPEKSLAFGKKSSGGRNNNGRITIRHKGGGHKKKYRIIDFKRNRNDQGVVEKIEYDPNRSGFLALVSYKCDDTKSYILAPQGIKPGDIVMSGSGIDILPGNCLPLKGIPIGSFVHGVELKPGSGAVIARAAGCYAQVVGRDGNYVLLRLRSGQVRLVLSSCKATIGVVSNPDRKNRKLGKAGRSRWLGVRPTVRGVAMNPVDHPHGGGEGKTSGGRHPVTPWGVATKGKKTRKKNKFSDKYIKQLKG.

Disordered regions lie at residues 30–54 (EKSL…IRHK) and 223–274 (VAMN…QLKG). A compositionally biased stretch (low complexity) spans 36–48 (GKKSSGGRNNNGR). Residues 263-274 (KFSDKYIKQLKG) are compositionally biased toward basic and acidic residues.

It belongs to the universal ribosomal protein uL2 family. As to quaternary structure, part of the 50S ribosomal subunit. Forms a bridge to the 30S subunit in the 70S ribosome.

One of the primary rRNA binding proteins. Required for association of the 30S and 50S subunits to form the 70S ribosome, for tRNA binding and peptide bond formation. It has been suggested to have peptidyltransferase activity; this is somewhat controversial. Makes several contacts with the 16S rRNA in the 70S ribosome. The chain is Large ribosomal subunit protein uL2 from Wolbachia sp. subsp. Brugia malayi (strain TRS).